Here is a 209-residue protein sequence, read N- to C-terminus: Redox-sensing transcriptional repressor Rex (209 aa).

The segment at residues 16–55 (LYYRFIQNLSLSGKQRVSSAELSEAVKVDSATIRRDFSYF) is a DNA-binding region (H-T-H motif). 90–95 (GVGNLG) provides a ligand contact to NAD(+).

The protein belongs to the transcriptional regulatory Rex family. In terms of assembly, homodimer.

It is found in the cytoplasm. Its function is as follows. Modulates transcription in response to changes in cellular NADH/NAD(+) redox state. In Bacillus anthracis (strain A0248), this protein is Redox-sensing transcriptional repressor Rex.